We begin with the raw amino-acid sequence, 306 residues long: Dioxygenase FrzG (306 aa).

Fe cation is bound by residues H132, D134, and H216.

This sequence belongs to the PhyH family. Homodimer. It depends on Fe cation as a cofactor.

The enzyme catalyses (1S,4S)-4-[(4-methoxyphenyl)methyl]-2-methyl-2,5-diazaspiro[bicyclo[3.2.1]octane-6,1'-cyclohexan]-4'-one + 2-oxoglutarate + O2 = (2S)-3-(4-methoxyphenyl)-2-[(3S)-3-(methylamino)-8-oxo-1-azaspiro[4.5]decan-1-yl]propanal + succinate + CO2. Its pathway is secondary metabolite biosynthesis. Dioxygenase; part of the gene cluster that mediates the biosynthesis of the alkaloid (-)-FR901483, a potent immunosuppressant that shows efficacy in animal models and a probable inhibitor of purine nucleotide biosynthesis by targeting phosphoribosylpyrophosphate amidotransferase (PPAT). Within the pathway, FrzG cleaves the C9-N10' bond to yield a conjugated iminium. FrzG is also able to catalyze the dehydrogenation between C7 and C8 which leads to a shunt product. The biosynthesis of (-)-FR901483 starts with the condensation of two L-tyrosines to yield (S,S)-dityrosyl-piperazine. This process occurs in 3 steps with the non-canonical nonribosomal peptide synthetase FrzA catalyzing the reduction of L-tyrosine into L-tyrosinal, the spontaneous condensation of 2 L-tyrosinal units, and the subsequent reduction by the NmrA-like family domain-containing oxidoreductase FrzB. The cytochrome P450 monooxygenase FrzC then performs coupling between N10 and C1' to morph the piperazine into a 1,4-diazabicyclo[3.2.1]octane spiro-fused to a 2,5-cyclohexadienone. The dienone portion is further reduced to cyclohexanone by the flavin-dependent reductase FrzD. The methyltranserases (MTs) FrzE and FrzF are then involved in the methylation at the C10' amine and the C4 phenolic oxygen, respectively. The order of the two MTs appear to be interchangeable. Cleavage of the C9-N10' bond by the dioxygenase FrzG then leads to formation of a conjugated iminium. In addition to the oxidation of C9, an additional dehydrogenation between C7 and C8 can occur to give a likely shunt product. The next biosynthetic step is the intramolecular aldol condensation catalyzed by the newly identified aldolase FrzH to yield an aza-tricyclic product with the formation of a C9-C3' bond. The short-chain dehydrogenase/reductase FrzI then produces dephospho-(-)-FR901483 that is phosphorylated at C4'-OH into (-)-FR901483 by the phosphotransferase FrzJ. The sequence is that of Dioxygenase FrzG from Cladobotryum sp.